The sequence spans 368 residues: UDP-N-acetylglucosamine--N-acetylmuramyl-(pentapeptide) pyrophosphoryl-undecaprenol N-acetylglucosamine transferase (368 aa).

UDP-N-acetyl-alpha-D-glucosamine contacts are provided by residues 10 to 12 (TGG), asparagine 124, serine 196, isoleucine 251, and glutamine 296.

The protein belongs to the glycosyltransferase 28 family. MurG subfamily.

It localises to the cell membrane. It catalyses the reaction Mur2Ac(oyl-L-Ala-gamma-D-Glu-L-Lys-D-Ala-D-Ala)-di-trans,octa-cis-undecaprenyl diphosphate + UDP-N-acetyl-alpha-D-glucosamine = beta-D-GlcNAc-(1-&gt;4)-Mur2Ac(oyl-L-Ala-gamma-D-Glu-L-Lys-D-Ala-D-Ala)-di-trans,octa-cis-undecaprenyl diphosphate + UDP + H(+). It functions in the pathway cell wall biogenesis; peptidoglycan biosynthesis. Cell wall formation. Catalyzes the transfer of a GlcNAc subunit on undecaprenyl-pyrophosphoryl-MurNAc-pentapeptide (lipid intermediate I) to form undecaprenyl-pyrophosphoryl-MurNAc-(pentapeptide)GlcNAc (lipid intermediate II). This is UDP-N-acetylglucosamine--N-acetylmuramyl-(pentapeptide) pyrophosphoryl-undecaprenol N-acetylglucosamine transferase from Limosilactobacillus fermentum (strain NBRC 3956 / LMG 18251) (Lactobacillus fermentum).